Reading from the N-terminus, the 192-residue chain is Inosine triphosphate pyrophosphatase (192 aa).

Position 10–15 (10–15 (TGNANK)) interacts with ITP. Glu46 serves as a coordination point for Mg(2+). Residues Lys58, 74-75 (DT), Lys91, 149-152 (FGWD), Lys172, and 177-178 (HR) contribute to the ITP site.

This sequence belongs to the HAM1 NTPase family. Homodimer. It depends on Mg(2+) as a cofactor. Mn(2+) serves as cofactor.

It localises to the cytoplasm. The protein localises to the nucleus. The enzyme catalyses ITP + H2O = IMP + diphosphate + H(+). It catalyses the reaction dITP + H2O = dIMP + diphosphate + H(+). It carries out the reaction XTP + H2O = XMP + diphosphate + H(+). In terms of biological role, pyrophosphatase that hydrolyzes non-canonical purine nucleotides such as inosine triphosphate (ITP), deoxyinosine triphosphate (dITP) or xanthosine 5'-triphosphate (XTP) to their respective monophosphate derivatives. The enzyme does not distinguish between the deoxy- and ribose forms. Probably excludes non-canonical purines from RNA and DNA precursor pools, thus preventing their incorporation into RNA and DNA and avoiding chromosomal lesions. This is Inosine triphosphate pyrophosphatase from Puccinia graminis f. sp. tritici (strain CRL 75-36-700-3 / race SCCL) (Black stem rust fungus).